Consider the following 132-residue polypeptide: Small ribosomal subunit protein uS8 (132 aa).

Belongs to the universal ribosomal protein uS8 family. As to quaternary structure, part of the 30S ribosomal subunit. Contacts proteins S5 and S12.

One of the primary rRNA binding proteins, it binds directly to 16S rRNA central domain where it helps coordinate assembly of the platform of the 30S subunit. The polypeptide is Small ribosomal subunit protein uS8 (Rubrobacter xylanophilus (strain DSM 9941 / JCM 11954 / NBRC 16129 / PRD-1)).